The sequence spans 292 residues: Elongation factor Ts (292 aa).

An involved in Mg(2+) ion dislocation from EF-Tu region spans residues 79–82 (TDFV).

Belongs to the EF-Ts family.

It is found in the cytoplasm. In terms of biological role, associates with the EF-Tu.GDP complex and induces the exchange of GDP to GTP. It remains bound to the aminoacyl-tRNA.EF-Tu.GTP complex up to the GTP hydrolysis stage on the ribosome. This chain is Elongation factor Ts, found in Xanthomonas axonopodis pv. citri (strain 306).